A 314-amino-acid polypeptide reads, in one-letter code: tRNA dimethylallyltransferase (314 aa).

12 to 19 (GPTASGKT) lines the ATP pocket. Residue 14–19 (TASGKT) coordinates substrate. 2 interaction with substrate tRNA regions span residues 37–40 (DSAQ) and 161–165 (QRIQR).

The protein belongs to the IPP transferase family. In terms of assembly, monomer. Mg(2+) serves as cofactor.

It catalyses the reaction adenosine(37) in tRNA + dimethylallyl diphosphate = N(6)-dimethylallyladenosine(37) in tRNA + diphosphate. Functionally, catalyzes the transfer of a dimethylallyl group onto the adenine at position 37 in tRNAs that read codons beginning with uridine, leading to the formation of N6-(dimethylallyl)adenosine (i(6)A). The polypeptide is tRNA dimethylallyltransferase (Nitrosococcus oceani (strain ATCC 19707 / BCRC 17464 / JCM 30415 / NCIMB 11848 / C-107)).